A 408-amino-acid polypeptide reads, in one-letter code: LL-diaminopimelate aminotransferase (408 aa).

Substrate contacts are provided by Tyr-15 and Gly-42. Pyridoxal 5'-phosphate is bound by residues Tyr-72, 108-109, Tyr-132, Asn-187, Tyr-218, and 246-248; these read SK and SFS. Substrate contacts are provided by Lys-109, Tyr-132, and Asn-187. Lys-249 is subject to N6-(pyridoxal phosphate)lysine. Residues Arg-257 and Asn-292 each contribute to the pyridoxal 5'-phosphate site. Residues Asn-292 and Arg-388 each contribute to the substrate site.

The protein belongs to the class-I pyridoxal-phosphate-dependent aminotransferase family. LL-diaminopimelate aminotransferase subfamily. As to quaternary structure, homodimer. Pyridoxal 5'-phosphate serves as cofactor.

The catalysed reaction is (2S,6S)-2,6-diaminopimelate + 2-oxoglutarate = (S)-2,3,4,5-tetrahydrodipicolinate + L-glutamate + H2O + H(+). The protein operates within amino-acid biosynthesis; L-lysine biosynthesis via DAP pathway; LL-2,6-diaminopimelate from (S)-tetrahydrodipicolinate (aminotransferase route): step 1/1. In terms of biological role, involved in the synthesis of meso-diaminopimelate (m-DAP or DL-DAP), required for both lysine and peptidoglycan biosynthesis. Catalyzes the direct conversion of tetrahydrodipicolinate to LL-diaminopimelate. This is LL-diaminopimelate aminotransferase from Prochlorococcus marinus (strain MIT 9313).